A 780-amino-acid chain; its full sequence is Translation initiation factor IF-2 (780 aa).

The segment at 24-194 (AEEKGFPVKN…KGAPERKNKA (171 aa)) is disordered. Polar residues-rich tracts occupy residues 59 to 71 (EQSA…QRKV) and 80 to 90 (QGTARTQTTAQ). Low complexity-rich tracts occupy residues 98 to 114 (NQTQ…QTGN) and 132 to 158 (NNNT…SRNN). Positions 159-176 (RNNRRRNNNNNNRYKKNQ) are enriched in basic residues. Basic and acidic residues predominate over residues 177–194 (RIKDTNQHKGAPERKNKA). The region spanning 281-450 (PRAPVVTIMG…LLQSDVLELK (170 aa)) is the tr-type G domain. The G1 stretch occupies residues 290 to 297 (GHVDHGKT). Position 290–297 (290–297 (GHVDHGKT)) interacts with GTP. The segment at 315–319 (GITQA) is G2. The segment at 336–339 (DTPG) is G3. Residues 336 to 340 (DTPGH) and 390 to 393 (NKID) contribute to the GTP site. Residues 390–393 (NKID) form a G4 region. A G5 region spans residues 426–428 (SAK).

The protein belongs to the TRAFAC class translation factor GTPase superfamily. Classic translation factor GTPase family. IF-2 subfamily.

It is found in the cytoplasm. In terms of biological role, one of the essential components for the initiation of protein synthesis. Protects formylmethionyl-tRNA from spontaneous hydrolysis and promotes its binding to the 30S ribosomal subunits. Also involved in the hydrolysis of GTP during the formation of the 70S ribosomal complex. The sequence is that of Translation initiation factor IF-2 from Levilactobacillus brevis (strain ATCC 367 / BCRC 12310 / CIP 105137 / JCM 1170 / LMG 11437 / NCIMB 947 / NCTC 947) (Lactobacillus brevis).